The following is a 294-amino-acid chain: 4-hydroxy-tetrahydrodipicolinate synthase (294 aa).

Threonine 45 is a binding site for pyruvate. The active-site Proton donor/acceptor is tyrosine 133. Lysine 162 serves as the catalytic Schiff-base intermediate with substrate. Valine 204 serves as a coordination point for pyruvate.

This sequence belongs to the DapA family. In terms of assembly, homotetramer; dimer of dimers.

It is found in the cytoplasm. It carries out the reaction L-aspartate 4-semialdehyde + pyruvate = (2S,4S)-4-hydroxy-2,3,4,5-tetrahydrodipicolinate + H2O + H(+). It functions in the pathway amino-acid biosynthesis; L-lysine biosynthesis via DAP pathway; (S)-tetrahydrodipicolinate from L-aspartate: step 3/4. Its function is as follows. Catalyzes the condensation of (S)-aspartate-beta-semialdehyde [(S)-ASA] and pyruvate to 4-hydroxy-tetrahydrodipicolinate (HTPA). This is 4-hydroxy-tetrahydrodipicolinate synthase from Bartonella bacilliformis (strain ATCC 35685 / KC583 / Herrer 020/F12,63).